The chain runs to 773 residues: Carnitine O-palmitoyltransferase 1, liver isoform (773 aa).

Ala2 is modified (N-acetylalanine). Over 2–47 the chain is Cytoplasmic; that stretch reads AEAHQAVAFQFTVTPDGIDLRLSHEALKQICLSGLHSWKKKFIRFK. A helical membrane pass occupies residues 48-73; it reads NGIITGVFPANPSSWLIVVVGVISSM. Over 74 to 102 the chain is Mitochondrial intermembrane; the sequence is HAKVDPSLGMIAKISRTLDTTGRMSSQTK. The chain crosses the membrane as a helical span at residues 103-122; it reads NIVSGVLFGTGLWVAVIMTM. Topologically, residues 123 to 773 are cytoplasmic; the sequence is RYSLKVLLSY…LFGLTINSKK (651 aa). Tyr282 is modified (3'-nitrotyrosine). His473 (proton acceptor) is an active-site residue. 555–567 contacts CoA; that stretch reads GKGLIKKCRTSPD. Thr588 carries the phosphothreonine modification. Position 589 is a 3'-nitrotyrosine (Tyr589). (R)-carnitine-binding residues include Tyr589 and Thr602. Thr604 is modified (phosphothreonine). Ser741 and Ser747 each carry phosphoserine.

Belongs to the carnitine/choline acetyltransferase family. As to quaternary structure, homohexamer and homotrimer. Identified in a complex that contains at least CPT1A, ACSL1 and VDAC1. Also identified in complexes with ACSL1 and VDAC2 and VDAC3. Interacts with ZDHHC4. In terms of tissue distribution, liver and kidney.

Its subcellular location is the mitochondrion outer membrane. It catalyses the reaction (R)-carnitine + hexadecanoyl-CoA = O-hexadecanoyl-(R)-carnitine + CoA. It carries out the reaction succinyl-CoA + L-lysyl-[protein] = N(6)-succinyl-L-lysyl-[protein] + CoA + H(+). Its pathway is lipid metabolism; fatty acid beta-oxidation. Inhibited by malonyl-CoA. Functionally, catalyzes the transfer of the acyl group of long-chain fatty acid-CoA conjugates onto carnitine, an essential step for the mitochondrial uptake of long-chain fatty acids and their subsequent beta-oxidation in the mitochondrion. Also possesses a lysine succinyltransferase activity that can regulate enzymatic activity of substrate proteins such as ENO1 and metabolism independent of its classical carnitine O-palmitoyltransferase activity. Plays an important role in hepatic triglyceride metabolism. Also plays a role in inducible regulatory T-cell (iTreg) differentiation once activated by butyryl-CoA that antagonizes malonyl-CoA-mediated CPT1A repression. Sustains the IFN-I response by recruiting ZDHCC4 to palmitoylate MAVS at the mitochondria leading to MAVS stabilization and activation. In Rattus norvegicus (Rat), this protein is Carnitine O-palmitoyltransferase 1, liver isoform (Cpt1a).